A 395-amino-acid chain; its full sequence is MSERKLFTSESVSEGHPDKIADQISDAILDAILAEDPEAHVAAETVVYTGSVHVFGEISTSAYVDINRVVRDTIAEIGYTNAEYGFSANSVGVHPSLVEQSTDIAQGVNEALEAREGQKDDLNLIGAGDQGLMFGFAIDETPELMPLPISLSHKLVKKLADLRKSGDITYLRPDAKSQVTVEYDDNDQPVRVDTVVISTQHDPEVSQETIRHDVIEKVIKEVIPTSFIDDNTKYFINPTGRFVIGGPQGDSGLTGRKIIVDTYGGYSRHGGGAFSGKDATKVDRSASYAARYIAKNIVAAGLAKKAEVQLAYAIGVAQPVSVRIDTFGTSTVSETDIEKAVRQLFDLRPAGIIKMLDLKRPIYKQTAAYGHMGRTDIDLPWEKLDKVEALKQLIG.

His-16 is a binding site for ATP. Asp-18 provides a ligand contact to Mg(2+). Glu-44 is a binding site for K(+). Residues Glu-57 and Gln-100 each coordinate L-methionine. The segment at 100–110 (QSTDIAQGVNE) is flexible loop. ATP contacts are provided by residues 174–176 (DAK), 241–242 (RF), Asp-250, 256–257 (RK), Ala-273, and Lys-277. Asp-250 provides a ligand contact to L-methionine. Lys-281 provides a ligand contact to L-methionine.

This sequence belongs to the AdoMet synthase family. Homotetramer; dimer of dimers. Mg(2+) serves as cofactor. The cofactor is K(+).

Its subcellular location is the cytoplasm. It catalyses the reaction L-methionine + ATP + H2O = S-adenosyl-L-methionine + phosphate + diphosphate. It functions in the pathway amino-acid biosynthesis; S-adenosyl-L-methionine biosynthesis; S-adenosyl-L-methionine from L-methionine: step 1/1. Functionally, catalyzes the formation of S-adenosylmethionine (AdoMet) from methionine and ATP. The overall synthetic reaction is composed of two sequential steps, AdoMet formation and the subsequent tripolyphosphate hydrolysis which occurs prior to release of AdoMet from the enzyme. In Streptococcus uberis (strain ATCC BAA-854 / 0140J), this protein is S-adenosylmethionine synthase.